Reading from the N-terminus, the 546-residue chain is Chaperonin GroEL (546 aa).

ATP is bound by residues 30–33, lysine 51, 87–91, glycine 415, and aspartate 495; these read TLGP and DGTTT.

The protein belongs to the chaperonin (HSP60) family. Forms a cylinder of 14 subunits composed of two heptameric rings stacked back-to-back. Interacts with the co-chaperonin GroES.

The protein resides in the cytoplasm. The catalysed reaction is ATP + H2O + a folded polypeptide = ADP + phosphate + an unfolded polypeptide.. In terms of biological role, together with its co-chaperonin GroES, plays an essential role in assisting protein folding. The GroEL-GroES system forms a nano-cage that allows encapsulation of the non-native substrate proteins and provides a physical environment optimized to promote and accelerate protein folding. This chain is Chaperonin GroEL, found in Brucella melitensis biotype 2 (strain ATCC 23457).